The chain runs to 148 residues: Succinate dehydrogenase assembly factor 3, mitochondrial (148 aa).

The N-terminal 12 residues, 1 to 12 (MYALRPTLRRSA), are a transit peptide targeting the mitochondrion. Residues 129-148 (RGTEGDLEDGDGGESGQKSQ) form a disordered region.

Belongs to the complex I LYR family. SDHAF3 subfamily. In terms of assembly, interacts with the iron-sulfur protein subunit within the SDH catalytic dimer.

It is found in the mitochondrion matrix. In terms of biological role, plays an essential role in the assembly of succinate dehydrogenase (SDH), an enzyme complex (also referred to as respiratory complex II) that is a component of both the tricarboxylic acid (TCA) cycle and the mitochondrial electron transport chain, and which couples the oxidation of succinate to fumarate with the reduction of ubiquinone (coenzyme Q) to ubiquinol. Promotes maturation of the iron-sulfur protein subunit of the SDH catalytic dimer, protecting it from the deleterious effects of oxidants. May act together with SDHAF1. This Neurospora crassa (strain ATCC 24698 / 74-OR23-1A / CBS 708.71 / DSM 1257 / FGSC 987) protein is Succinate dehydrogenase assembly factor 3, mitochondrial.